Consider the following 262-residue polypeptide: Tritrans,polycis-undecaprenyl-diphosphate synthase (geranylgeranyl-diphosphate specific) (262 aa).

Residue aspartate 40 is part of the active site. Aspartate 40 is a binding site for Mg(2+). Substrate is bound by residues 41–44 (GNRR), tryptophan 45, and 85–87 (STE). Residue asparagine 88 is the Proton acceptor of the active site. Substrate-binding positions include arginine 92, arginine 211, and 217-219 (RIS). Glutamate 230 lines the Mg(2+) pocket.

The protein belongs to the UPP synthase family. Homodimer. It depends on Mg(2+) as a cofactor.

It carries out the reaction geranylgeranyl diphosphate + 7 isopentenyl diphosphate = tri-trans,hepta-cis-undecaprenyl diphosphate + 7 diphosphate. Catalyzes the sequential condensation of isopentenyl diphosphate (IPP) with geranylgeranyl diphosphate (GGPP) to yield (2Z,6Z,10Z,14Z,18Z,22Z,26Z,30E,34E,38E)-undecaprenyl diphosphate (tritrans,heptacis-UPP). It is probably the precursor of glycosyl carrier lipids. This is Tritrans,polycis-undecaprenyl-diphosphate synthase (geranylgeranyl-diphosphate specific) from Sulfurisphaera tokodaii (strain DSM 16993 / JCM 10545 / NBRC 100140 / 7) (Sulfolobus tokodaii).